The primary structure comprises 325 residues: 4-hydroxy-3-methylbut-2-enyl diphosphate reductase (325 aa).

Cys-25 is a binding site for [4Fe-4S] cluster. His-54 and His-87 together coordinate (2E)-4-hydroxy-3-methylbut-2-enyl diphosphate. His-54 and His-87 together coordinate dimethylallyl diphosphate. 2 residues coordinate isopentenyl diphosphate: His-54 and His-87. Cys-109 provides a ligand contact to [4Fe-4S] cluster. His-137 lines the (2E)-4-hydroxy-3-methylbut-2-enyl diphosphate pocket. A dimethylallyl diphosphate-binding site is contributed by His-137. An isopentenyl diphosphate-binding site is contributed by His-137. Residue Glu-139 is the Proton donor of the active site. (2E)-4-hydroxy-3-methylbut-2-enyl diphosphate is bound at residue Thr-179. Cys-209 is a [4Fe-4S] cluster binding site. Positions 237, 238, 239, and 282 each coordinate (2E)-4-hydroxy-3-methylbut-2-enyl diphosphate. Dimethylallyl diphosphate is bound by residues Ser-237, Ser-238, Asn-239, and Ser-282. Positions 237, 238, 239, and 282 each coordinate isopentenyl diphosphate.

The protein belongs to the IspH family. [4Fe-4S] cluster is required as a cofactor.

It carries out the reaction isopentenyl diphosphate + 2 oxidized [2Fe-2S]-[ferredoxin] + H2O = (2E)-4-hydroxy-3-methylbut-2-enyl diphosphate + 2 reduced [2Fe-2S]-[ferredoxin] + 2 H(+). It catalyses the reaction dimethylallyl diphosphate + 2 oxidized [2Fe-2S]-[ferredoxin] + H2O = (2E)-4-hydroxy-3-methylbut-2-enyl diphosphate + 2 reduced [2Fe-2S]-[ferredoxin] + 2 H(+). It functions in the pathway isoprenoid biosynthesis; dimethylallyl diphosphate biosynthesis; dimethylallyl diphosphate from (2E)-4-hydroxy-3-methylbutenyl diphosphate: step 1/1. It participates in isoprenoid biosynthesis; isopentenyl diphosphate biosynthesis via DXP pathway; isopentenyl diphosphate from 1-deoxy-D-xylulose 5-phosphate: step 6/6. Catalyzes the conversion of 1-hydroxy-2-methyl-2-(E)-butenyl 4-diphosphate (HMBPP) into a mixture of isopentenyl diphosphate (IPP) and dimethylallyl diphosphate (DMAPP). Acts in the terminal step of the DOXP/MEP pathway for isoprenoid precursor biosynthesis. In Corynebacterium glutamicum (strain ATCC 13032 / DSM 20300 / JCM 1318 / BCRC 11384 / CCUG 27702 / LMG 3730 / NBRC 12168 / NCIMB 10025 / NRRL B-2784 / 534), this protein is 4-hydroxy-3-methylbut-2-enyl diphosphate reductase.